A 632-amino-acid polypeptide reads, in one-letter code: 1-deoxy-D-xylulose-5-phosphate synthase (632 aa).

Thiamine diphosphate is bound by residues histidine 72 and glycine 113 to alanine 115. Mg(2+) is bound at residue aspartate 144. Thiamine diphosphate-binding positions include glycine 145–alanine 146, asparagine 174, tyrosine 285, and glutamate 368. Residue asparagine 174 coordinates Mg(2+).

It belongs to the transketolase family. DXPS subfamily. In terms of assembly, homodimer. Requires Mg(2+) as cofactor. It depends on thiamine diphosphate as a cofactor.

It catalyses the reaction D-glyceraldehyde 3-phosphate + pyruvate + H(+) = 1-deoxy-D-xylulose 5-phosphate + CO2. Its pathway is metabolic intermediate biosynthesis; 1-deoxy-D-xylulose 5-phosphate biosynthesis; 1-deoxy-D-xylulose 5-phosphate from D-glyceraldehyde 3-phosphate and pyruvate: step 1/1. In terms of biological role, catalyzes the acyloin condensation reaction between C atoms 2 and 3 of pyruvate and glyceraldehyde 3-phosphate to yield 1-deoxy-D-xylulose-5-phosphate (DXP). The protein is 1-deoxy-D-xylulose-5-phosphate synthase of Cyanothece sp. (strain PCC 7425 / ATCC 29141).